A 428-amino-acid polypeptide reads, in one-letter code: Adenylosuccinate synthetase (428 aa).

GTP-binding positions include 11-17 (GDEGKGK) and 39-41 (GHT). The active-site Proton acceptor is Asp-12. Mg(2+) is bound by residues Asp-12 and Gly-39. Residues 12 to 15 (DEGK), 37 to 40 (NAGH), Thr-130, Arg-144, Asn-226, Thr-241, and Arg-305 each bind IMP. The active-site Proton donor is the His-40. 301-307 (VTTGRKR) is a substrate binding site. Residues Arg-307, 333-335 (KLD), and 415-417 (GTG) contribute to the GTP site.

The protein belongs to the adenylosuccinate synthetase family. As to quaternary structure, homodimer. Requires Mg(2+) as cofactor.

It localises to the cytoplasm. It catalyses the reaction IMP + L-aspartate + GTP = N(6)-(1,2-dicarboxyethyl)-AMP + GDP + phosphate + 2 H(+). The protein operates within purine metabolism; AMP biosynthesis via de novo pathway; AMP from IMP: step 1/2. In terms of biological role, plays an important role in the de novo pathway and in the salvage pathway of purine nucleotide biosynthesis. Catalyzes the first committed step in the biosynthesis of AMP from IMP. This Candida albicans (strain SC5314 / ATCC MYA-2876) (Yeast) protein is Adenylosuccinate synthetase.